A 238-amino-acid polypeptide reads, in one-letter code: Small ribosomal subunit protein uS3 (238 aa).

Residues 39–108 form the KH type-2 domain; it reads IRKFVKKKLF…NVAVNVIEVK (70 aa).

This sequence belongs to the universal ribosomal protein uS3 family. In terms of assembly, part of the 30S ribosomal subunit. Forms a tight complex with proteins S10 and S14.

Its function is as follows. Binds the lower part of the 30S subunit head. Binds mRNA in the 70S ribosome, positioning it for translation. This Alkaliphilus oremlandii (strain OhILAs) (Clostridium oremlandii (strain OhILAs)) protein is Small ribosomal subunit protein uS3.